Consider the following 508-residue polypeptide: MAELQMLLEEEIPSGKRALIESYQNLTRVADYCENNYIQATDKRKALEETKAYTTQSLASVAYQINALANNVLQLLDIQASQLRRMESSINHISQTVDIHKEKVARREIGILTTNKNTSRTHKIIAPANMERPVRYIRKPIDYTVLDDVGHGVKWLKAKHGNNQPARTGTLSRTNPPTQKPPSPPMSGRGTLGRNTPYKTLEPVKPPTVPNDYMTSPARLGSQHSPGRTASLNQRPRTHSGSSGGSGSRENSGSSSIGIPIAVPTPSPPTIGPENISVPPPSGAPPAPPLAPLLPVSTVIAAPGSAPGSQYGTMTRQISRHNSTTSSTSSGGYRRTPSVTAQFSAQPHVNGGPLYSQNSISIAPPPPPMPQLTPQIPLTGFVARVQENIADSPTPPPPPPPDDIPMFDDSPPPPPPPPVDYEDEEAAVVQYNDPYADGDPAWAPKNYIEKVVAIYDYTKDKDDELSFMEGAIIYVIKKNDDGWYEGVCNRVTGLFPGNYVESIMHYTD.

N-acetylalanine is present on alanine 2. The tract at residues 18–79 is required for binding to WASF1; the sequence is ALIESYQNLT…NNVLQLLDIQ (62 aa). A t-SNARE coiled-coil homology domain is found at 45–107; it reads KALEETKAYT…DIHKEKVARR (63 aa). Tyrosine 53 is modified (phosphotyrosine). Disordered regions lie at residues 159-290, 306-375, and 388-421; these read KHGN…APPL, APGS…LTPQ, and NIAD…PVDY. Over residues 161-175 the composition is skewed to polar residues; sequence GNNQPARTGTLSRTN. Phosphothreonine is present on residues threonine 174 and threonine 178. Serine 183 and serine 187 each carry phosphoserine. At tyrosine 213 the chain carries Phosphotyrosine; by ABL1. Threonine 215 carries the phosphothreonine modification. Phosphoserine occurs at positions 216, 222, and 225. A compositionally biased stretch (polar residues) spans 222–235; sequence SQHSPGRTASLNQR. The segment covering 248 to 258 has biased composition (low complexity); that stretch reads SRENSGSSSIG. The segment covering 278–290 has biased composition (pro residues); the sequence is VPPPSGAPPAPPL. Over residues 307–322 the composition is skewed to polar residues; that stretch reads PGSQYGTMTRQISRHN. A phosphoserine mark is found at serine 319 and serine 323. Residues 337-347 show a composition bias toward polar residues; sequence PSVTAQFSAQP. 2 stretches are compositionally biased toward pro residues: residues 393-403 and 410-419; these read PTPPPPPPPDD and SPPPPPPPPV. The SH3 domain occupies 446 to 505; sequence NYIEKVVAIYDYTKDKDDELSFMEGAIIYVIKKNDDGWYEGVCNRVTGLFPGNYVESIMH. Tyrosine 455 carries the post-translational modification Phosphotyrosine. At serine 466 the chain carries Phosphoserine. A Phosphothreonine modification is found at threonine 507.

The protein belongs to the ABI family. Interacts with ABL1, ENAH, STX1A, SNAP25, VAMP2, EPS8, and through its N-terminus with WASF1. Part of a complex consisting of ABI1, STX1A and SNAP25. Part of a complex consisting of ABI1, EPS8 and SOS1. Interacts with SOS1, SOS2, GRB2, SPTA1 and the first SH3 domain of NCK1. Isoform 6 does not interact with NCK1. Component of the WAVE2 complex composed of ABI1, CYFIP1/SRA1, NCKAP1/NAP1 (NCKAP1l/HEM1 in hematopoietic cells) and WASF2/WAVE2. Interacts (via SH3 domain) with SHANK2 and SHANK3, but not SHANK1; the interaction is direct. Interacts with the heterodimer MYC:MAX; the interaction may enhance MYC:MAX transcriptional activity. Interacts with FNBP1L (via the SH3 domain), WASF2, and CDC42, but only in the presence of FNBP1L. As to quaternary structure, (Microbial infection) Interacts with human cytomegalovirus/HHV-5 protein UL135. Phosphorylated on tyrosine residues after serum stimulation or induction by v-Abl. Seems to be phosphorylated at Tyr-53 by ABL1, required for nuclear but not for synaptic localization. As to expression, widely expressed, with highest expression in brain.

Its subcellular location is the cytoplasm. The protein resides in the nucleus. It localises to the cell projection. It is found in the lamellipodium. The protein localises to the filopodium. Its subcellular location is the growth cone. The protein resides in the postsynaptic density. It localises to the cytoskeleton. Functionally, may act in negative regulation of cell growth and transformation by interacting with nonreceptor tyrosine kinases ABL1 and/or ABL2. May play a role in regulation of EGF-induced Erk pathway activation. Involved in cytoskeletal reorganization and EGFR signaling. Together with EPS8 participates in transduction of signals from Ras to Rac. In vitro, a trimeric complex of ABI1, EPS8 and SOS1 exhibits Rac specific guanine nucleotide exchange factor (GEF) activity and ABI1 seems to act as an adapter in the complex. Regulates ABL1/c-Abl-mediated phosphorylation of ENAH. Recruits WASF1 to lamellipodia and there seems to regulate WASF1 protein level. In brain, seems to regulate the dendritic outgrowth and branching as well as to determine the shape and number of synaptic contacts of developing neurons. This chain is Abl interactor 1, found in Homo sapiens (Human).